The sequence spans 940 residues: Valine--tRNA ligase (940 aa).

The 'HIGH' region motif lies at 47–57 (PNVTGILHMGH). A 'KMSKS' region motif is present at residues 564 to 568 (KLSKS). ATP is bound at residue K567. Positions 872-938 (PMEHITKERN…LQSILDKLAS (67 aa)) form a coiled coil.

This sequence belongs to the class-I aminoacyl-tRNA synthetase family. ValS type 1 subfamily. As to quaternary structure, monomer.

It is found in the cytoplasm. The catalysed reaction is tRNA(Val) + L-valine + ATP = L-valyl-tRNA(Val) + AMP + diphosphate. Its function is as follows. Catalyzes the attachment of valine to tRNA(Val). As ValRS can inadvertently accommodate and process structurally similar amino acids such as threonine, to avoid such errors, it has a 'posttransfer' editing activity that hydrolyzes mischarged Thr-tRNA(Val) in a tRNA-dependent manner. The protein is Valine--tRNA ligase of Chlamydia caviae (strain ATCC VR-813 / DSM 19441 / 03DC25 / GPIC) (Chlamydophila caviae).